Reading from the N-terminus, the 343-residue chain is N-acetyl-gamma-glutamyl-phosphate reductase (343 aa).

Cys-146 is an active-site residue.

The protein belongs to the NAGSA dehydrogenase family. Type 1 subfamily.

It localises to the cytoplasm. It carries out the reaction N-acetyl-L-glutamate 5-semialdehyde + phosphate + NADP(+) = N-acetyl-L-glutamyl 5-phosphate + NADPH + H(+). It participates in amino-acid biosynthesis; L-arginine biosynthesis; N(2)-acetyl-L-ornithine from L-glutamate: step 3/4. Its function is as follows. Catalyzes the NADPH-dependent reduction of N-acetyl-5-glutamyl phosphate to yield N-acetyl-L-glutamate 5-semialdehyde. This Acidothermus cellulolyticus (strain ATCC 43068 / DSM 8971 / 11B) protein is N-acetyl-gamma-glutamyl-phosphate reductase.